Here is a 432-residue protein sequence, read N- to C-terminus: Glutamate-1-semialdehyde 2,1-aminomutase (432 aa).

Lysine 271 carries the N6-(pyridoxal phosphate)lysine modification.

It belongs to the class-III pyridoxal-phosphate-dependent aminotransferase family. HemL subfamily. As to quaternary structure, homodimer. Pyridoxal 5'-phosphate is required as a cofactor.

It is found in the cytoplasm. The catalysed reaction is (S)-4-amino-5-oxopentanoate = 5-aminolevulinate. It participates in porphyrin-containing compound metabolism; protoporphyrin-IX biosynthesis; 5-aminolevulinate from L-glutamyl-tRNA(Glu): step 2/2. Its pathway is porphyrin-containing compound metabolism; chlorophyll biosynthesis. The sequence is that of Glutamate-1-semialdehyde 2,1-aminomutase from Prochlorococcus marinus (strain MIT 9211).